The primary structure comprises 500 residues: Cytochrome P450 2D4 (500 aa).

Residue Cys446 participates in heme binding.

This sequence belongs to the cytochrome P450 family. The cofactor is heme. In terms of tissue distribution, brain.

Its subcellular location is the endoplasmic reticulum membrane. The protein localises to the microsome membrane. The catalysed reaction is an organic molecule + reduced [NADPH--hemoprotein reductase] + O2 = an alcohol + oxidized [NADPH--hemoprotein reductase] + H2O + H(+). Cytochromes P450 are a group of heme-thiolate monooxygenases. In liver microsomes, this enzyme is involved in an NADPH-dependent electron transport pathway. It oxidizes a variety of structurally unrelated compounds, including steroids, fatty acids, and xenobiotics. In Rattus norvegicus (Rat), this protein is Cytochrome P450 2D4 (Cyp2d4).